Reading from the N-terminus, the 384-residue chain is ATP phosphoribosyltransferase regulatory subunit (384 aa).

The protein belongs to the class-II aminoacyl-tRNA synthetase family. HisZ subfamily. As to quaternary structure, heteromultimer composed of HisG and HisZ subunits.

Its subcellular location is the cytoplasm. It participates in amino-acid biosynthesis; L-histidine biosynthesis; L-histidine from 5-phospho-alpha-D-ribose 1-diphosphate: step 1/9. In terms of biological role, required for the first step of histidine biosynthesis. May allow the feedback regulation of ATP phosphoribosyltransferase activity by histidine. The chain is ATP phosphoribosyltransferase regulatory subunit from Paracidovorax citrulli (strain AAC00-1) (Acidovorax citrulli).